The primary structure comprises 778 residues: Zinc finger protein 749 (778 aa).

The KRAB domain occupies 8–101; it reads MVFEDVAIYF…ILKDILHLAE (94 aa). The C2H2-type 1; degenerate zinc finger occupies 152-174; sequence FTCTQGGKDFTASSDLLQQQVLN. The C2H2-type 2; degenerate zinc finger occupies 196-218; the sequence is FNSSQGGKDFCHQHGLFEHQKTH. Residues 224-246 form a C2H2-type 3; degenerate zinc finger; that stretch reads YEFSECGELFRYNSNLIKYQQNH. The C2H2-type 4; degenerate zinc-finger motif lies at 252–274; the sequence is YEGTEYGKTFIRKSNLVQHQKIH. 6 consecutive C2H2-type zinc fingers follow at residues 298 to 320, 326 to 348, 354 to 376, 382 to 404, 410 to 432, and 438 to 460; these read YECT…QKTH, YECN…QKVH, YECS…QRVH, FECS…QRVH, YKCS…LKIH, and YECT…QKIH. Lys466 is subject to N6-acetyllysine. C2H2-type zinc fingers lie at residues 483 to 505 and 511 to 533; these read YTCS…QKIH and YECT…EKIH. Lys539 carries the post-translational modification N6-acetyllysine. Residues 556–578 form a C2H2-type 13; degenerate zinc finger; it reads YVCSECGKAFLTQAHLDGHQKIQ. 3 consecutive C2H2-type zinc fingers follow at residues 584–606, 612–634, and 640–662; these read YECN…QRIH, YKCS…QKVH, and YECS…QRVH. The C2H2-type 17; atypical zinc-finger motif lies at 668 to 690; sequence YECSNCGKFLRYRSTFIKHHKVC. A C2H2-type 18 zinc finger spans residues 696–718; it reads HECSKCRELFRTKSSLIIHQQSH. The C2H2-type 19; degenerate zinc finger occupies 751 to 773; sequence YECGESSKVFKYNSSLIKHQIIH. Residues Lys761 and Lys768 each participate in a glycyl lysine isopeptide (Lys-Gly) (interchain with G-Cter in SUMO2) cross-link.

The protein belongs to the krueppel C2H2-type zinc-finger protein family.

It localises to the nucleus. Functionally, may be involved in transcriptional regulation. The polypeptide is Zinc finger protein 749 (ZNF749) (Homo sapiens (Human)).